The sequence spans 275 residues: MSGLVLERIFEEAEGEGRGALIGYLTCGHPGLEETVSLARALRDGGVDILELGVPFSEPIADGPTIQKAVDEALRAGTTPWDCLEVAEEVSEFVPVVLLCYYNTLHANGFERYLSAAAEAGVSGIIVADMPVEESDEVHSVARDLEIDVIYLVAPSTTDERLKKIGERASGFVYVISRYGVTGARRDLSEDTLELVRWVRDHVDVPVAVGFGISERWHVEEVIAAGADGAIVGSAFIKEIHRSEDIAEAEERVRELAKELVEGARDGYRRRSSSE.

Residues Glu51 and Asp62 each act as proton acceptor in the active site.

Belongs to the TrpA family. As to quaternary structure, tetramer of two alpha and two beta chains.

It catalyses the reaction (1S,2R)-1-C-(indol-3-yl)glycerol 3-phosphate + L-serine = D-glyceraldehyde 3-phosphate + L-tryptophan + H2O. It functions in the pathway amino-acid biosynthesis; L-tryptophan biosynthesis; L-tryptophan from chorismate: step 5/5. Functionally, the alpha subunit is responsible for the aldol cleavage of indoleglycerol phosphate to indole and glyceraldehyde 3-phosphate. The protein is Tryptophan synthase alpha chain of Methanopyrus kandleri (strain AV19 / DSM 6324 / JCM 9639 / NBRC 100938).